We begin with the raw amino-acid sequence, 261 residues long: Polycomb group RING finger protein 1 (261 aa).

An RING-type zinc finger spans residues 45–84; that stretch reads CYLCAGYFIDATTITECLHTFCKSCIVKYLQTSKYCPMCN.

As to quaternary structure, component of a PRC1-like complex.

It is found in the nucleus. Functionally, component of a Polycomb group (PcG) multiprotein PRC1-like complex, a complex class required to maintain the transcriptionally repressive state of many genes, including Hox genes, throughout development. PcG PRC1 complex acts via chromatin remodeling and modification of histones; it mediates monoubiquitination of histone H2A 'Lys-119', rendering chromatin heritably changed in its expressibility. In Danio rerio (Zebrafish), this protein is Polycomb group RING finger protein 1 (pcgf1).